We begin with the raw amino-acid sequence, 1452 residues long: Pleiotropic drug resistance protein 1 (1452 aa).

An ABC transporter 1 domain is found at 152-425 (LNYLHILPNR…FEYMGFICPE (274 aa)). 185–192 (GPPSSGKT) contacts ATP. In terms of domain architecture, ABC transmembrane type-2 1 spans 504 to 716 (LLKACTAREY…AQNAIAVNEF (213 aa)). Helical transmembrane passes span 521–541 (FVYI…MTLF), 554–574 (GAVF…NGFS), 609–629 (IPIT…VIGF), 640–660 (LLLL…MGAL), 664–684 (IIVA…MGGF), 694–714 (WWIW…IAVN), and 753–773 (IGAG…AVAL). The disordered stretch occupies residues 808-830 (LGKSSSEKGNDVRRSASSRSMSS). Over residues 812–821 (SSEKGNDVRR) the composition is skewed to basic and acidic residues. In terms of domain architecture, ABC transporter 2 spans 855–1107 (ITFDDIRYAV…HLIKYFEGID (253 aa)). 900–907 (GVSGAGKT) contacts ATP. One can recognise an ABC transmembrane type-2 2 domain in the interval 1180-1394 (TQCMACFWKQ…TLYGLIASQF (215 aa)). Helical transmembrane passes span 1199-1219 (YTAV…TIFW), 1239-1259 (YIAV…VIAI), 1287-1307 (LPYL…MIGF), 1314-1334 (FFWY…YGMM), 1344-1364 (IAAI…GFIV), 1375-1395 (WYYY…SQFG), and 1421-1441 (FVGY…FIFA).

This sequence belongs to the ABC transporter superfamily. ABCG family. PDR (TC 3.A.1.205) subfamily. In terms of tissue distribution, expressed in root hypodermal passage cells. Expressed in stem tissues, particularly the vasculature and nodes adjacent to leaf axils.

It is found in the cell membrane. Cellular strigolactone (SL) transporter required for the exudation of SL from the root to the soil. The presence of SL in the vicinity of the roots is required for development of symbiotic interactions with arbuscular mycorrhizal fungi (AMF). Transports SL in the above ground tissues and is required for the control of shoot branching. SL regulates plant shoot architecture by inhibiting the outgrowth of axillary buds. Involved in the regulation of shootward and outward directional strigolactone transport in roots. Due to its polar localization in root cells, mediates directional shootward strigolactone transport, as well as localized outward directional transport for exudation to the soil. The polypeptide is Pleiotropic drug resistance protein 1 (Petunia hybrida (Petunia)).